A 528-amino-acid polypeptide reads, in one-letter code: DNA damage-binding protein cmr1 (528 aa).

Disordered stretches follow at residues 32–98 and 217–243; these read AQSS…QYEA and DASQ…DPDP. Basic residues predominate over residues 52–62; it reads KPKKKPPPKKV. One copy of the WD 1 repeat lies at 185 to 226; sequence LTPERIYTMTFHPSEAKPLIFAGDKMGNLGVLDASQEKPTSA. Over residues 230 to 242 the composition is skewed to acidic residues; sequence EDDEEDAEDDDPD. 6 WD repeats span residues 250-290, 297-337, 342-382, 389-428, 451-494, and 497-528; these read PHTR…SVEK, SDDI…RSAV, LSEK…HDDP, VSRL…AAWE, GRWV…LAQL, and DGIT…CLWM.

The protein belongs to the WD repeat DDB2/WDR76 family.

Functionally, DNA-binding protein that binds to both single- and double-stranded DNA. Binds preferentially to UV-damaged DNA. May be involved in DNA-metabolic processes. The polypeptide is DNA damage-binding protein cmr1 (Aspergillus fumigatus (strain CBS 144.89 / FGSC A1163 / CEA10) (Neosartorya fumigata)).